The chain runs to 81 residues: MAITKKMLVVFLLAFLFVTSSVHCSDSTLGIGINQDWKKCFSPDPCKKAGTQGCMEFCRTISFLLFGECTSKPDQCCCVTK.

The N-terminal stretch at 1–24 is a signal peptide; sequence MAITKKMLVVFLLAFLFVTSSVHC. Intrachain disulfides connect Cys-40/Cys-78, Cys-46/Cys-69, Cys-54/Cys-76, and Cys-58/Cys-77.

Belongs to the DEFL family.

It is found in the secreted. This is Defensin-like protein 115 from Arabidopsis thaliana (Mouse-ear cress).